A 112-amino-acid polypeptide reads, in one-letter code: Iron-sulfur cluster assembly protein CyaY (112 aa).

This sequence belongs to the frataxin family.

Functionally, involved in iron-sulfur (Fe-S) cluster assembly. May act as a regulator of Fe-S biogenesis. The chain is Iron-sulfur cluster assembly protein CyaY from Herminiimonas arsenicoxydans.